Here is a 453-residue protein sequence, read N- to C-terminus: Glutamyl-tRNA(Gln) amidotransferase subunit A (453 aa).

Active-site charge relay system residues include Lys-56 and Ser-131. Ser-155 (acyl-ester intermediate) is an active-site residue.

This sequence belongs to the amidase family. GatA subfamily. As to quaternary structure, heterotrimer of A, B and C subunits.

It catalyses the reaction L-glutamyl-tRNA(Gln) + L-glutamine + ATP + H2O = L-glutaminyl-tRNA(Gln) + L-glutamate + ADP + phosphate + H(+). Functionally, allows the formation of correctly charged Gln-tRNA(Gln) through the transamidation of misacylated Glu-tRNA(Gln) in organisms which lack glutaminyl-tRNA synthetase. The reaction takes place in the presence of glutamine and ATP through an activated gamma-phospho-Glu-tRNA(Gln). The polypeptide is Glutamyl-tRNA(Gln) amidotransferase subunit A (Campylobacter fetus subsp. fetus (strain 82-40)).